The following is a 320-amino-acid chain: Cytosolic Fe-S cluster assembly factor NUBP1 (320 aa).

Met-1 bears the N-acetylmethionine mark. Cys-8, Cys-22, Cys-25, and Cys-31 together coordinate [4Fe-4S] cluster. Residue 62–69 (GKGGVGKS) participates in ATP binding. 2 residues coordinate [4Fe-4S] cluster: Cys-235 and Cys-238. Ser-319 bears the Phosphoserine mark.

It belongs to the Mrp/NBP35 ATP-binding proteins family. NUBP1/NBP35 subfamily. In terms of assembly, heterotetramer of 2 NUBP1 and 2 NUBP2 chains. Interacts with KIFC1. Interacts with the BBS/CCT complex subunit CCT1. The cofactor is [4Fe-4S] cluster.

It is found in the cytoplasm. Its subcellular location is the nucleus. The protein resides in the cell projection. The protein localises to the cytoskeleton. It localises to the cilium axoneme. It is found in the cilium basal body. Its subcellular location is the microtubule organizing center. The protein resides in the centrosome. The protein localises to the centriole. In terms of biological role, component of the cytosolic iron-sulfur (Fe/S) protein assembly (CIA) machinery. Required for maturation of extramitochondrial Fe-S proteins. The NUBP1-NUBP2 heterotetramer forms a Fe-S scaffold complex, mediating the de novo assembly of an Fe-S cluster and its transfer to target apoproteins. Implicated in the regulation of centrosome duplication. Negatively regulates cilium formation and structure. This Rattus norvegicus (Rat) protein is Cytosolic Fe-S cluster assembly factor NUBP1.